We begin with the raw amino-acid sequence, 238 residues long: Uridylate kinase (238 aa).

12–15 contributes to the ATP binding site; it reads KLSG. The tract at residues 20–25 is involved in allosteric activation by GTP; it reads GDEGFG. G54 is a UMP binding site. ATP is bound by residues G55 and R59. UMP is bound by residues D74 and 135 to 142; that span reads TGSPFFTT. Residues T162, Y168, and D171 each coordinate ATP.

This sequence belongs to the UMP kinase family. As to quaternary structure, homohexamer.

It localises to the cytoplasm. It catalyses the reaction UMP + ATP = UDP + ADP. The protein operates within pyrimidine metabolism; CTP biosynthesis via de novo pathway; UDP from UMP (UMPK route): step 1/1. Its activity is regulated as follows. Allosterically activated by GTP. Inhibited by UTP. Functionally, catalyzes the reversible phosphorylation of UMP to UDP. In Histophilus somni (strain 129Pt) (Haemophilus somnus), this protein is Uridylate kinase.